The following is a 482-amino-acid chain: MELNELTIIQIREKLKNKEIDAPTLVDSIIKNIEEDNKRDDKIYAYLEIFKEEALEQAKKAQERINNGEDLPLLGVPLAIKDNLCYKDHLMTASSKMLEGYKAPYTAPTVQRLIDNGAIIIGRTNMDEFAMGGTTETSNYGVTRNPKNRAHVPGGSSGGSAAAVAANFAFGALGSDTGGSIRQPASFCGIVGVKPTYGRVPRLGCIAMASSLDQVGPLTKDVKDAALMTKIIAGFDPKESTTLNIPVPDYVAALDGNIKGMKIGLAKEYYDTDLIAADVKENVMDAIGKLKDQGAEIVDISLPNAKYGSRVYTAVMDVEVASNMGRYDGIRYGYHPKGDFNLDEYYYTSRSVGLAFETRARILFGTLMTGKRFFYSHYQHALKVRKLMQMDFDNAFKNVDVIVSPTSPVTAGLLGTRDQTDSALSFLADSYVSNINLVGLPAMSVPCGVDKNNMPIGIQFITKQFNEVDMFRMAYAHELANK.

Residues Lys-81 and Ser-156 each act as charge relay system in the active site. Ser-180 acts as the Acyl-ester intermediate in catalysis.

It belongs to the amidase family. GatA subfamily. In terms of assembly, heterotrimer of A, B and C subunits.

The catalysed reaction is L-glutamyl-tRNA(Gln) + L-glutamine + ATP + H2O = L-glutaminyl-tRNA(Gln) + L-glutamate + ADP + phosphate + H(+). Its function is as follows. Allows the formation of correctly charged Gln-tRNA(Gln) through the transamidation of misacylated Glu-tRNA(Gln) in organisms which lack glutaminyl-tRNA synthetase. The reaction takes place in the presence of glutamine and ATP through an activated gamma-phospho-Glu-tRNA(Gln). This is Glutamyl-tRNA(Gln) amidotransferase subunit A from Brachyspira hyodysenteriae (strain ATCC 49526 / WA1).